The primary structure comprises 173 residues: Small ribosomal subunit protein uS5 (173 aa).

One can recognise an S5 DRBM domain in the interval 17–80 (LREKMIAVNR…EEARRNMVKV (64 aa)).

It belongs to the universal ribosomal protein uS5 family. Part of the 30S ribosomal subunit. Contacts proteins S4 and S8.

With S4 and S12 plays an important role in translational accuracy. Its function is as follows. Located at the back of the 30S subunit body where it stabilizes the conformation of the head with respect to the body. This Acidovorax sp. (strain JS42) protein is Small ribosomal subunit protein uS5.